Reading from the N-terminus, the 465-residue chain is ATP synthase subunit beta (465 aa).

151 to 158 contributes to the ATP binding site; the sequence is GGAGVGKT.

It belongs to the ATPase alpha/beta chains family. In terms of assembly, F-type ATPases have 2 components, CF(1) - the catalytic core - and CF(0) - the membrane proton channel. CF(1) has five subunits: alpha(3), beta(3), gamma(1), delta(1), epsilon(1). CF(0) has four main subunits: a(1), b(1), b'(1) and c(9-12).

It is found in the cell inner membrane. The catalysed reaction is ATP + H2O + 4 H(+)(in) = ADP + phosphate + 5 H(+)(out). Produces ATP from ADP in the presence of a proton gradient across the membrane. The catalytic sites are hosted primarily by the beta subunits. In Chloroherpeton thalassium (strain ATCC 35110 / GB-78), this protein is ATP synthase subunit beta.